A 139-amino-acid polypeptide reads, in one-letter code: MAMTYHLDVVSAEQQMFSGLVEKIQVTGSEGELGIYPGHAPLLTAIKPGMIRIVKQHGHEEFIYLSGGILEVQPGNVTVLADTAIRGQDLDEARAMEAKRKAEEHISSSHGDVDYAQASAELAKAIAQLRVIELTKKAM.

It belongs to the ATPase epsilon chain family. F-type ATPases have 2 components, CF(1) - the catalytic core - and CF(0) - the membrane proton channel. CF(1) has five subunits: alpha(3), beta(3), gamma(1), delta(1), epsilon(1). CF(0) has three main subunits: a, b and c.

It localises to the cell inner membrane. Its function is as follows. Produces ATP from ADP in the presence of a proton gradient across the membrane. The protein is ATP synthase epsilon chain of Escherichia coli O139:H28 (strain E24377A / ETEC).